The following is a 759-amino-acid chain: Forkhead box protein M1 (759 aa).

The tract at residues 1–92 (MRTSPRRPLI…MRLPSNPPQS (92 aa)) is disordered. Basic and acidic residues predominate over residues 48–63 (LAHELEDMAPKSKADQ). Positions 260 to 358 (RPPYSYMALI…KTASPMSPAD (99 aa)) form a DNA-binding region, fork-head. 3 disordered regions span residues 420–450 (AESS…KHLG), 516–535 (SANP…PSNV), and 596–631 (KEHF…RDPV). Low complexity predominate over residues 601–612 (KPTTSSTPSKPT).

In terms of tissue distribution, localized to the animal hemisphere of early cleavage stage embryos. During neurulation, expressed in the neural folds. Later, expressed in the spinal cord and in the eye field. During tailbud stages, expression is still restricted to the neuroectoderm, predominantly to the hindbrain, the eye and the spinal cord. With ongoing development, expression is also found at lower levels in the branchial arches. At stage 35, expressed in the rhombencephalon and in the eye retina.

Its subcellular location is the nucleus. Transcription factor regulating the expression of cell cycle genes essential for DNA replication and mitosis. Plays a role in the control of cell proliferation. Also plays a role in DNA break repair, participating in the DNA damage checkpoint response. Promotes transcription of PHB2. The polypeptide is Forkhead box protein M1 (Xenopus laevis (African clawed frog)).